A 256-amino-acid chain; its full sequence is Small ribosomal subunit protein eS1 (256 aa).

Residues Met1–Lys18 are compositionally biased toward basic residues. The segment at Met1–Val21 is disordered. Ala2 is modified (N-acetylalanine; partial).

This sequence belongs to the eukaryotic ribosomal protein eS1 family. In terms of assembly, component of the small ribosomal subunit. Mature ribosomes consist of a small (40S) and a large (60S) subunit. The 40S subunit contains about 33 different proteins and 1 molecule of RNA (18S). The 60S subunit contains about 49 different proteins and 3 molecules of RNA (25S, 5.8S and 5S).

The protein resides in the cytoplasm. The polypeptide is Small ribosomal subunit protein eS1 (rps1) (Neosartorya fischeri (strain ATCC 1020 / DSM 3700 / CBS 544.65 / FGSC A1164 / JCM 1740 / NRRL 181 / WB 181) (Aspergillus fischerianus)).